We begin with the raw amino-acid sequence, 339 residues long: Ribosomal RNA large subunit methyltransferase F (339 aa).

The disordered stretch occupies residues Met1 to Arg26.

This sequence belongs to the methyltransferase superfamily. METTL16/RlmF family.

It localises to the cytoplasm. It carries out the reaction adenosine(1618) in 23S rRNA + S-adenosyl-L-methionine = N(6)-methyladenosine(1618) in 23S rRNA + S-adenosyl-L-homocysteine + H(+). Specifically methylates the adenine in position 1618 of 23S rRNA. The polypeptide is Ribosomal RNA large subunit methyltransferase F (Pseudomonas fluorescens (strain SBW25)).